The following is a 148-amino-acid chain: Ribose-5-P isomerase B (148 aa).

8–9 (DE) lines the D-ribulose 5-phosphate pocket. C65 (proton acceptor) is an active-site residue. Residues 66 to 70 (GTGIG), N99, R132, and K136 contribute to the D-ribulose 5-phosphate site.

Belongs to the LacAB/RpiB family.

It carries out the reaction aldehydo-D-ribose 5-phosphate = D-ribulose 5-phosphate. It functions in the pathway carbohydrate degradation; pentose phosphate pathway; D-ribose 5-phosphate from D-ribulose 5-phosphate (non-oxidative stage): step 1/1. In terms of biological role, catalyzes the interconversion of ribulose-5-P and ribose-5-P. This is Ribose-5-P isomerase B from Listeria innocua serovar 6a (strain ATCC BAA-680 / CLIP 11262).